The primary structure comprises 158 residues: MTRLTHLDSTGAARMVDVSDKPSTTREALAEGQVVMAPETLALIQSGNAKKGDVLGVARIAGIMASKRTHELIPLCHPLMLSKVEVEVTPDEALPGLHVVARVKTAGQTGVEMEALTAVSVACLTIYDMAKAADRGMRIENIRLLEKSGGRSGDWRAA.

Substrate contacts are provided by residues 75-77 (LCH) and 113-114 (ME). The active site involves aspartate 128.

Belongs to the MoaC family. As to quaternary structure, homohexamer; trimer of dimers.

The enzyme catalyses (8S)-3',8-cyclo-7,8-dihydroguanosine 5'-triphosphate = cyclic pyranopterin phosphate + diphosphate. Its pathway is cofactor biosynthesis; molybdopterin biosynthesis. Its function is as follows. Catalyzes the conversion of (8S)-3',8-cyclo-7,8-dihydroguanosine 5'-triphosphate to cyclic pyranopterin monophosphate (cPMP). This Azorhizobium caulinodans (strain ATCC 43989 / DSM 5975 / JCM 20966 / LMG 6465 / NBRC 14845 / NCIMB 13405 / ORS 571) protein is Cyclic pyranopterin monophosphate synthase.